Here is a 593-residue protein sequence, read N- to C-terminus: MSGKIEYISGPVVKADLPGARLYELVFVGEIRLFGEVVRVQGDKAFIQVYEDTTGLKPGEPVERTGEPLSAWLGPTIIGKIYDGVQRPLKDIEEISKNPFIARGIGYDKAPPLDLKSEFDFRPAVKPGDEVSPGDVLGSVKETELMTHYILYPPLPEHAPGVVEWVAEGKYKVDDVIARIKTKRGVVEVKMWHKWPVRRPRPFREKLPPVEPLITGVRTVDTMFPIAKGGAAAVPGPFGSGKTVMIRTLSMFAQSRFIIPVLCGERGNEAADALQGLLKLKDPATGRPLLERTTIIVNTSNMPVAAREASVYMGTTLGEYFRDQGYDVLVLADSTSRWAEAMREVALRIGEMPSEEGYPAYLPTRLAEFYERAGRVVLMGSKERIGSLTIAASVSPPGGDFTEPVTSNTLRFIGAFWPLSPRLAYSRHYPAIDWLAAFSRYVDTVEVWWSKNVSPEWRKIRDSLQSLLVKEAELQEIVRILGTEALSEYEKHILNVAFMIREGFLKQDAYNPIDTPSAPIKQFLLMKAIYTYYEEGLKAIEAGVPASALRELDSVKRLPRLRMEVTNDAAKEQLTKFIETLVLEIREKVARKS.

ATP is bound at residue 236–243; it reads GPFGSGKT.

It belongs to the ATPase alpha/beta chains family. Has multiple subunits with at least A(3), B(3), C, D, E, F, H, I and proteolipid K(x).

It localises to the cell membrane. The catalysed reaction is ATP + H2O + 4 H(+)(in) = ADP + phosphate + 5 H(+)(out). Functionally, component of the A-type ATP synthase that produces ATP from ADP in the presence of a proton gradient across the membrane. The A chain is the catalytic subunit. The sequence is that of A-type ATP synthase subunit A from Pyrobaculum arsenaticum (strain DSM 13514 / JCM 11321 / PZ6).